Here is a 117-residue protein sequence, read N- to C-terminus: Small ribosomal subunit protein bS6 (117 aa).

This sequence belongs to the bacterial ribosomal protein bS6 family.

Binds together with bS18 to 16S ribosomal RNA. This Porphyromonas gingivalis (strain ATCC BAA-308 / W83) protein is Small ribosomal subunit protein bS6.